We begin with the raw amino-acid sequence, 246 residues long: tRNA (guanine-N(1)-)-methyltransferase (246 aa).

S-adenosyl-L-methionine is bound by residues Gly113 and 133–138 (IGDYVL).

The protein belongs to the RNA methyltransferase TrmD family. In terms of assembly, homodimer.

It is found in the cytoplasm. The enzyme catalyses guanosine(37) in tRNA + S-adenosyl-L-methionine = N(1)-methylguanosine(37) in tRNA + S-adenosyl-L-homocysteine + H(+). Its function is as follows. Specifically methylates guanosine-37 in various tRNAs. The polypeptide is tRNA (guanine-N(1)-)-methyltransferase (Yersinia enterocolitica serotype O:8 / biotype 1B (strain NCTC 13174 / 8081)).